The sequence spans 250 residues: ADPR responsive transcriptional repressor NtrR (250 aa).

Residues 26–157 (LMTVDMAIFS…DHHDLLQQAF (132 aa)) enclose the Nudix hydrolase domain. Positions 62 to 85 (GFVDLEQDQNLMACAHRKLLEKTG) match the Nudix box motif. A winged helix-like DNA-binding region region spans residues 164-237 (TRYTALPISL…RFALQDYDFN (74 aa)).

DNA binding is efficiently suppressed in the presence of ADP-ribose (ADPR) or phospho-ADPR. Accumulation of ADPR resulting from NAD degradation may be interpreted by the cell as a signal to activate recycling of nicotinamide. Functionally, involved in the transcriptional regulation of the nondeamidating salvage pathway for production of NAD from nicotinamide. Represses expression of the prs-nadV-nrtR operon by binding to the DNA region located upstream of the operon, thus blocking the nondeamidating pathway. The sequence is that of ADPR responsive transcriptional repressor NtrR from Acinetobacter baylyi (strain ATCC 33305 / BD413 / ADP1).